The sequence spans 499 residues: GTPase Der (499 aa).

2 consecutive EngA-type G domains span residues 3-166 (PVVA…LETL) and 213-386 (IKFA…QSAT). Residues 9-16 (GRPNVGKS), 56-60 (DTGGI), 118-121 (NKTD), 219-226 (GRPNVGKS), 266-270 (DTAGV), and 331-334 (NKWD) each bind GTP. The region spanning 387-471 (RRTSTAMLTR…PVRVEFQESA (85 aa)) is the KH-like domain.

Belongs to the TRAFAC class TrmE-Era-EngA-EngB-Septin-like GTPase superfamily. EngA (Der) GTPase family. In terms of assembly, associates with the 50S ribosomal subunit.

Its function is as follows. GTPase that plays an essential role in the late steps of ribosome biogenesis. This chain is GTPase Der, found in Aeromonas hydrophila subsp. hydrophila (strain ATCC 7966 / DSM 30187 / BCRC 13018 / CCUG 14551 / JCM 1027 / KCTC 2358 / NCIMB 9240 / NCTC 8049).